A 456-amino-acid polypeptide reads, in one-letter code: Putative dihydroorotase (456 aa).

This sequence belongs to the metallo-dependent hydrolases superfamily. DHOase family. Class I DHOase subfamily.

The catalysed reaction is (S)-dihydroorotate + H2O = N-carbamoyl-L-aspartate + H(+). It participates in pyrimidine metabolism; UMP biosynthesis via de novo pathway; (S)-dihydroorotate from bicarbonate: step 3/3. Functionally, catalyzes the reversible cyclization of carbamoyl aspartate to dihydroorotate. This Rhodopirellula baltica (strain DSM 10527 / NCIMB 13988 / SH1) protein is Putative dihydroorotase.